A 521-amino-acid polypeptide reads, in one-letter code: Tetratricopeptide repeat and J domain-containing co-chaperone DNJ1 (521 aa).

Residues Met-1–Ala-21 form the signal peptide. TPR repeat units follow at residues Val-33 to Asn-66, Tyr-67 to Phe-100, Gly-102 to Ala-134, Pro-176 to Asp-209, Ser-211 to Ser-244, Leu-315 to Ser-348, and Phe-349 to Gln-382. Residues Asp-404–Asp-473 form the J domain. The segment covering Glu-464–Asp-474 has biased composition (basic and acidic residues). The disordered stretch occupies residues Glu-464–Phe-521. The segment covering Asn-489–Pro-508 has biased composition (gly residues). Positions Asn-509–Phe-521 are enriched in low complexity.

The protein localises to the endoplasmic reticulum lumen. Endoplasmic reticulum co-chaperone required for the of virulence factors such as PG1, the major endopolygalacturonase produced during the infection of tomato plants. In Fusarium oxysporum f. sp. lycopersici (strain 4287 / CBS 123668 / FGSC 9935 / NRRL 34936) (Fusarium vascular wilt of tomato), this protein is Tetratricopeptide repeat and J domain-containing co-chaperone DNJ1.